Here is a 162-residue protein sequence, read N- to C-terminus: Phosphopantetheine adenylyltransferase (162 aa).

Residue T10 coordinates substrate. ATP contacts are provided by residues T10 to F11 and H18. Residues K42, L74, and R88 each contribute to the substrate site. ATP contacts are provided by residues G89–R91, E99, and N124–T130.

Belongs to the bacterial CoaD family. In terms of assembly, homohexamer. Mg(2+) is required as a cofactor.

It localises to the cytoplasm. The enzyme catalyses (R)-4'-phosphopantetheine + ATP + H(+) = 3'-dephospho-CoA + diphosphate. It participates in cofactor biosynthesis; coenzyme A biosynthesis; CoA from (R)-pantothenate: step 4/5. Its function is as follows. Reversibly transfers an adenylyl group from ATP to 4'-phosphopantetheine, yielding dephospho-CoA (dPCoA) and pyrophosphate. This is Phosphopantetheine adenylyltransferase from Alteromonas mediterranea (strain DSM 17117 / CIP 110805 / LMG 28347 / Deep ecotype).